A 291-amino-acid chain; its full sequence is Ribosomal RNA small subunit methyltransferase H (291 aa).

Residues Gly36 to His38, Asp55, Leu88, Asp102, and Gln109 each bind S-adenosyl-L-methionine. Residues Lys268–Ile291 form a disordered region.

The protein belongs to the methyltransferase superfamily. RsmH family.

The protein resides in the cytoplasm. The catalysed reaction is cytidine(1402) in 16S rRNA + S-adenosyl-L-methionine = N(4)-methylcytidine(1402) in 16S rRNA + S-adenosyl-L-homocysteine + H(+). Its function is as follows. Specifically methylates the N4 position of cytidine in position 1402 (C1402) of 16S rRNA. This is Ribosomal RNA small subunit methyltransferase H from Thermosipho melanesiensis (strain DSM 12029 / CIP 104789 / BI429).